A 778-amino-acid polypeptide reads, in one-letter code: Subtilisin-like protease SBT5.4 (778 aa).

The first 35 residues, 1–35, serve as a signal peptide directing secretion; sequence MSMTRRYSSTQYSNKMSLQSLSSLLLLVTLFFSPA. The 86-residue stretch at 41-126 folds into the Inhibitor I9 domain; it reads SYIVYLGSHA…VFPNKGRKLH (86 aa). Positions 130 to 634 constitute a Peptidase S8 domain; it reads SWNFMLLAKN…SGHVQPNKAA (505 aa). Asp-163 functions as the Charge relay system in the catalytic mechanism. Asn-218 carries an N-linked (GlcNAc...) asparagine glycan. Catalysis depends on His-230, which acts as the Charge relay system. N-linked (GlcNAc...) asparagine glycans are attached at residues Asn-253 and Asn-404. Residues 401–486 form the PA domain; it reads ANGNVTDALL…KDGETLFSYL (86 aa). The active-site Charge relay system is Ser-567. N-linked (GlcNAc...) asparagine glycosylation is found at Asn-657, Asn-690, and Asn-732.

Belongs to the peptidase S8 family. As to expression, expressed in the vasculature of roots and leaves, stomata, sepals, stigma, anthers and siliques.

It localises to the endoplasmic reticulum. The protein localises to the cell membrane. Its function is as follows. Serine protease. Has a substrate preference for the hydrophobic residues Phe and Ala and the basic residue Asp in the P1 position, and for Asp, Leu or Ala in the P1' position. Interferes with CLAVATA 3 (CLV3) signaling, but does not cleave CLV3. In Arabidopsis thaliana (Mouse-ear cress), this protein is Subtilisin-like protease SBT5.4.